A 68-amino-acid polypeptide reads, in one-letter code: MSKRYAVILAAGQGTRMKSSLYKVLHPVCGKPMVQHVIDQLSRLDLTNLITVVGHGAEKVKSHVGDKS.

UDP-N-acetyl-alpha-D-glucosamine is bound by residues 9-12 (LAAG) and K23.

This sequence in the N-terminal section; belongs to the N-acetylglucosamine-1-phosphate uridyltransferase family. The protein in the C-terminal section; belongs to the transferase hexapeptide repeat family. As to quaternary structure, homotrimer. Mg(2+) is required as a cofactor.

It localises to the cytoplasm. It carries out the reaction alpha-D-glucosamine 1-phosphate + acetyl-CoA = N-acetyl-alpha-D-glucosamine 1-phosphate + CoA + H(+). The catalysed reaction is N-acetyl-alpha-D-glucosamine 1-phosphate + UTP + H(+) = UDP-N-acetyl-alpha-D-glucosamine + diphosphate. Its pathway is nucleotide-sugar biosynthesis; UDP-N-acetyl-alpha-D-glucosamine biosynthesis; N-acetyl-alpha-D-glucosamine 1-phosphate from alpha-D-glucosamine 6-phosphate (route II): step 2/2. The protein operates within nucleotide-sugar biosynthesis; UDP-N-acetyl-alpha-D-glucosamine biosynthesis; UDP-N-acetyl-alpha-D-glucosamine from N-acetyl-alpha-D-glucosamine 1-phosphate: step 1/1. It participates in bacterial outer membrane biogenesis; LPS lipid A biosynthesis. Its function is as follows. Catalyzes the last two sequential reactions in the de novo biosynthetic pathway for UDP-N-acetylglucosamine (UDP-GlcNAc). The C-terminal domain catalyzes the transfer of acetyl group from acetyl coenzyme A to glucosamine-1-phosphate (GlcN-1-P) to produce N-acetylglucosamine-1-phosphate (GlcNAc-1-P), which is converted into UDP-GlcNAc by the transfer of uridine 5-monophosphate (from uridine 5-triphosphate), a reaction catalyzed by the N-terminal domain. This is Bifunctional protein GlmU (glmU) from Priestia megaterium (Bacillus megaterium).